The following is a 157-amino-acid chain: Transcription elongation factor GreA (157 aa).

Residues 1-75 adopt a coiled-coil conformation; it reads MSKEIILTQE…VETLINRAKV (75 aa).

The protein belongs to the GreA/GreB family.

Functionally, necessary for efficient RNA polymerase transcription elongation past template-encoded arresting sites. The arresting sites in DNA have the property of trapping a certain fraction of elongating RNA polymerases that pass through, resulting in locked ternary complexes. Cleavage of the nascent transcript by cleavage factors such as GreA or GreB allows the resumption of elongation from the new 3'terminus. GreA releases sequences of 2 to 3 nucleotides. The sequence is that of Transcription elongation factor GreA from Mycoplasma capricolum subsp. capricolum (strain California kid / ATCC 27343 / NCTC 10154).